The chain runs to 219 residues: Probable nicotinate-nucleotide adenylyltransferase (219 aa).

It belongs to the NadD family.

The catalysed reaction is nicotinate beta-D-ribonucleotide + ATP + H(+) = deamido-NAD(+) + diphosphate. It functions in the pathway cofactor biosynthesis; NAD(+) biosynthesis; deamido-NAD(+) from nicotinate D-ribonucleotide: step 1/1. Its function is as follows. Catalyzes the reversible adenylation of nicotinate mononucleotide (NaMN) to nicotinic acid adenine dinucleotide (NaAD). The polypeptide is Probable nicotinate-nucleotide adenylyltransferase (Hahella chejuensis (strain KCTC 2396)).